The chain runs to 726 residues: Peroxisomal fatty acid beta-oxidation multifunctional protein (726 aa).

It in the N-terminal section; belongs to the enoyl-CoA hydratase/isomerase family. The protein in the central section; belongs to the 3-hydroxyacyl-CoA dehydrogenase family. As to quaternary structure, monomer.

Its subcellular location is the peroxisome. The protein resides in the cytoplasm. It localises to the cytoskeleton. It carries out the reaction a (3S)-3-hydroxyacyl-CoA = a (2E)-enoyl-CoA + H2O. It catalyses the reaction a 4-saturated-(3S)-3-hydroxyacyl-CoA = a (3E)-enoyl-CoA + H2O. The catalysed reaction is a (3Z)-enoyl-CoA = a 4-saturated (2E)-enoyl-CoA. The enzyme catalyses a (3E)-enoyl-CoA = a 4-saturated (2E)-enoyl-CoA. It carries out the reaction (3S)-3-hydroxybutanoyl-CoA = (3R)-3-hydroxybutanoyl-CoA. It catalyses the reaction a (3S)-3-hydroxyacyl-CoA + NAD(+) = a 3-oxoacyl-CoA + NADH + H(+). Its pathway is lipid metabolism; fatty acid beta-oxidation. Its function is as follows. Multifunctional enzyme involved in fatty acid beta-oxidation. Also binds to RNA and microtubules. Possible role in subcellular mRNA localization and RNA-cytoskeleton interactions. The chain is Peroxisomal fatty acid beta-oxidation multifunctional protein (MFP) from Oryza sativa subsp. japonica (Rice).